Consider the following 211-residue polypeptide: FMN-dependent NADH:quinone oxidoreductase (211 aa).

FMN contacts are provided by residues 17 to 19 and 99 to 102; these read SYS and MWNF.

It belongs to the azoreductase type 1 family. In terms of assembly, homodimer. The cofactor is FMN.

The enzyme catalyses 2 a quinone + NADH + H(+) = 2 a 1,4-benzosemiquinone + NAD(+). The catalysed reaction is N,N-dimethyl-1,4-phenylenediamine + anthranilate + 2 NAD(+) = 2-(4-dimethylaminophenyl)diazenylbenzoate + 2 NADH + 2 H(+). Functionally, quinone reductase that provides resistance to thiol-specific stress caused by electrophilic quinones. Also exhibits azoreductase activity. Catalyzes the reductive cleavage of the azo bond in aromatic azo compounds to the corresponding amines. This chain is FMN-dependent NADH:quinone oxidoreductase, found in Exiguobacterium sp. (strain ATCC BAA-1283 / AT1b).